The following is a 173-amino-acid chain: Adenine phosphoribosyltransferase (173 aa).

It belongs to the purine/pyrimidine phosphoribosyltransferase family. In terms of assembly, homodimer.

Its subcellular location is the cytoplasm. The catalysed reaction is AMP + diphosphate = 5-phospho-alpha-D-ribose 1-diphosphate + adenine. It participates in purine metabolism; AMP biosynthesis via salvage pathway; AMP from adenine: step 1/1. In terms of biological role, catalyzes a salvage reaction resulting in the formation of AMP, that is energically less costly than de novo synthesis. The polypeptide is Adenine phosphoribosyltransferase (Solibacter usitatus (strain Ellin6076)).